Consider the following 166-residue polypeptide: Large ribosomal subunit protein uL10 (166 aa).

The protein belongs to the universal ribosomal protein uL10 family. Part of the ribosomal stalk of the 50S ribosomal subunit. The N-terminus interacts with L11 and the large rRNA to form the base of the stalk. The C-terminus forms an elongated spine to which L12 dimers bind in a sequential fashion forming a multimeric L10(L12)X complex.

Its function is as follows. Forms part of the ribosomal stalk, playing a central role in the interaction of the ribosome with GTP-bound translation factors. This chain is Large ribosomal subunit protein uL10, found in Streptococcus agalactiae serotype V (strain ATCC BAA-611 / 2603 V/R).